The sequence spans 234 residues: Glucosamine-6-phosphate deaminase (234 aa).

Residue aspartate 62 is the Proton acceptor; for enolization step of the active site. The For ring-opening step role is filled by asparagine 128. Histidine 130 functions as the Proton acceptor; for ring-opening step in the catalytic mechanism. Glutamate 135 (for ring-opening step) is an active-site residue.

Belongs to the glucosamine/galactosamine-6-phosphate isomerase family. NagB subfamily.

The catalysed reaction is alpha-D-glucosamine 6-phosphate + H2O = beta-D-fructose 6-phosphate + NH4(+). The protein operates within amino-sugar metabolism; N-acetylneuraminate degradation; D-fructose 6-phosphate from N-acetylneuraminate: step 5/5. Functionally, catalyzes the reversible isomerization-deamination of glucosamine 6-phosphate (GlcN6P) to form fructose 6-phosphate (Fru6P) and ammonium ion. This is Glucosamine-6-phosphate deaminase from Streptococcus pyogenes serotype M1.